The following is a 596-amino-acid chain: Zinc finger CCCH domain-containing protein 64 (596 aa).

2 disordered regions span residues 243 to 263 (LSPTPTSTMSPAELSAKPPKT) and 272 to 291 (DGAAESKKRPNDSDSDSQYW). 2 C3H1-type zinc fingers span residues 303–331 (SQGEKLCFKFVCSGSCPRGEDCHFQHNAE) and 335–363 (QCRRGVCLDLIIKGKCEKGPECSYKHEFQ).

This chain is Zinc finger CCCH domain-containing protein 64, found in Arabidopsis thaliana (Mouse-ear cress).